We begin with the raw amino-acid sequence, 224 residues long: Endoplasmic reticulum vesicle protein 25 (224 aa).

Positions 1–25 (MIPPRSLGSTAALLLVLLFTTLASA) are cleaved as a signal peptide. At 26–190 (IKFDLPSNAH…ADTNLSTNMR (165 aa)) the chain is on the lumenal side. Residues 38-131 (TKCIWNYALS…IPVVTIDLDV (94 aa)) form the GOLD domain. The helical transmembrane segment at 191-211 (VTNFAILTLIALIALGVWQVF) threads the bilayer. Over 212–224 (HLRGFFKRKYLID) the chain is Cytoplasmic.

The protein belongs to the EMP24/GP25L family.

It localises to the endoplasmic reticulum membrane. The protein localises to the golgi apparatus membrane. Its function is as follows. Constituent of COPII-coated endoplasmic reticulum-derived transport vesicles. Required for efficient transport of a subset of secretory proteins to the Golgi. Facilitates retrograde transport from the Golgi to the endoplasmic reticulum. The chain is Endoplasmic reticulum vesicle protein 25 (ERV25) from Mycosarcoma maydis (Corn smut fungus).